The following is a 388-amino-acid chain: Zinc finger CCCH domain-containing protein 47 (388 aa).

Disordered stretches follow at residues 1–130 (MADP…MAPL) and 144–282 (PLHE…TPSA). Basic and acidic residues-rich tracts occupy residues 61-109 (AAND…KSEV) and 181-193 (PDNH…HLPR). Residues 260 to 274 (ASSSSSSSSAGQQGS) show a composition bias toward low complexity. 2 consecutive C3H1-type zinc fingers follow at residues 321–348 (HHKI…HGEE) and 359–388 (GGGG…HGGV).

The polypeptide is Zinc finger CCCH domain-containing protein 47 (Oryza sativa subsp. japonica (Rice)).